The chain runs to 118 residues: uncharacterized protein (118 aa).

A helical transmembrane segment spans residues 21–38 (IVYFFFFFGLETFFSIIN).

It localises to the membrane. This is an uncharacterized protein from Dictyostelium discoideum (Social amoeba).